The sequence spans 482 residues: O-phosphoseryl-tRNA(Sec) selenium transferase (482 aa).

Positions 1 to 36 are tetramerization; sequence MKSSFGKKEGEYSRLVSKSSNKLLNSLWEKKQIPEE. Arg69 serves as a coordination point for pyridoxal 5'-phosphate. The phosphate loop (P-loop) stretch occupies residues 90 to 100; it reads GRSGNLLEIQP. Residues Arg91, Ser92, and Gln99 each contribute to the substrate site. Lys277 is modified (N6-(pyridoxal phosphate)lysine). Arg306 provides a ligand contact to substrate. TRNA is bound at residue Arg388. The tract at residues 461-482 is disordered; it reads DRRGGSSGRRVPMNESFDMEND.

This sequence belongs to the SepSecS family. Homotetramer formed by a catalytic dimer and a non-catalytic dimer serving as a binding platform that orients tRNASec for catalysis. Each tetramer binds the CCA ends of two tRNAs which point to the active sites of the catalytic dimer. Requires pyridoxal 5'-phosphate as cofactor.

It is found in the cytoplasm. The catalysed reaction is O-phospho-L-seryl-tRNA(Sec) + selenophosphate + H2O = L-selenocysteinyl-tRNA(Sec) + 2 phosphate. It functions in the pathway aminoacyl-tRNA biosynthesis; selenocysteinyl-tRNA(Sec) biosynthesis; selenocysteinyl-tRNA(Sec) from L-seryl-tRNA(Sec) (archaeal/eukaryal route): step 2/2. Converts O-phosphoseryl-tRNA(Sec) to selenocysteinyl-tRNA(Sec) required for selenoprotein biosynthesis. This Caenorhabditis briggsae protein is O-phosphoseryl-tRNA(Sec) selenium transferase (secs-1).